The primary structure comprises 305 residues: UDP-3-O-acyl-N-acetylglucosamine deacetylase (305 aa).

Residues H79, H238, and D242 each contribute to the Zn(2+) site. H265 (proton donor) is an active-site residue.

This sequence belongs to the LpxC family. Zn(2+) serves as cofactor.

The enzyme catalyses a UDP-3-O-[(3R)-3-hydroxyacyl]-N-acetyl-alpha-D-glucosamine + H2O = a UDP-3-O-[(3R)-3-hydroxyacyl]-alpha-D-glucosamine + acetate. Its pathway is glycolipid biosynthesis; lipid IV(A) biosynthesis; lipid IV(A) from (3R)-3-hydroxytetradecanoyl-[acyl-carrier-protein] and UDP-N-acetyl-alpha-D-glucosamine: step 2/6. Functionally, catalyzes the hydrolysis of UDP-3-O-myristoyl-N-acetylglucosamine to form UDP-3-O-myristoylglucosamine and acetate, the committed step in lipid A biosynthesis. This Vibrio campbellii (strain ATCC BAA-1116) protein is UDP-3-O-acyl-N-acetylglucosamine deacetylase.